A 166-amino-acid polypeptide reads, in one-letter code: Crossover junction endodeoxyribonuclease RuvC (166 aa).

Residues aspartate 7, glutamate 67, and aspartate 140 contribute to the active site. The Mg(2+) site is built by aspartate 7, glutamate 67, and aspartate 140.

This sequence belongs to the RuvC family. As to quaternary structure, homodimer which binds Holliday junction (HJ) DNA. The HJ becomes 2-fold symmetrical on binding to RuvC with unstacked arms; it has a different conformation from HJ DNA in complex with RuvA. In the full resolvosome a probable DNA-RuvA(4)-RuvB(12)-RuvC(2) complex forms which resolves the HJ. Mg(2+) is required as a cofactor.

The protein resides in the cytoplasm. It catalyses the reaction Endonucleolytic cleavage at a junction such as a reciprocal single-stranded crossover between two homologous DNA duplexes (Holliday junction).. Functionally, the RuvA-RuvB-RuvC complex processes Holliday junction (HJ) DNA during genetic recombination and DNA repair. Endonuclease that resolves HJ intermediates. Cleaves cruciform DNA by making single-stranded nicks across the HJ at symmetrical positions within the homologous arms, yielding a 5'-phosphate and a 3'-hydroxyl group; requires a central core of homology in the junction. The consensus cleavage sequence is 5'-(A/T)TT(C/G)-3'. Cleavage occurs on the 3'-side of the TT dinucleotide at the point of strand exchange. HJ branch migration catalyzed by RuvA-RuvB allows RuvC to scan DNA until it finds its consensus sequence, where it cleaves and resolves the cruciform DNA. This is Crossover junction endodeoxyribonuclease RuvC from Ruminiclostridium cellulolyticum (strain ATCC 35319 / DSM 5812 / JCM 6584 / H10) (Clostridium cellulolyticum).